The primary structure comprises 1842 residues: Fatty acid synthase subunit alpha (1842 aa).

The interval 101–141 is disordered; the sequence is PAEAPASTSSTPKVETAAAAAPAATPAPAPAQTSAPAAALP. Residues 116 to 139 are compositionally biased toward low complexity; the sequence is TAAAAAPAATPAPAPAQTSAPAAA. One can recognise a Carrier domain in the interval 145 to 220; it reads PKALEVLHTL…AIMQSSFNGS (76 aa). An O-(pantetheine 4'-phosphoryl)serine modification is found at S180. A Phosphoserine modification is found at S604. The region spanning 1079 to 1616 is the Ketosynthase family 3 (KS3) domain; it reads LQEVVIDHDL…QVGGQVIVIH (538 aa). Catalysis depends on C1262, which acts as the For beta-ketoacyl synthase activity. The tract at residues 1304-1332 is disordered; sequence GATSNAAKETERGRTPQEMSRPATSTRDG. S1412 bears the Phosphoserine mark. Catalysis depends on for beta-ketoacyl synthase activity residues H1501 and H1542. Mg(2+) contacts are provided by D1728, V1729, and E1730. Acetyl-CoA contacts are provided by residues 1728-1730, Y1754, S1764, 1773-1783, 1797-1800, and 1827-1829; these read DVE, EAVFKSLGISG, SSES, and ISH. Mg(2+) is bound by residues S1828 and H1829.

This sequence belongs to the thiolase-like superfamily. Fungal fatty acid synthetase subunit alpha family. In terms of assembly, [Alpha(6)beta(6)] hexamers of two multifunctional subunits (alpha and beta).

The enzyme catalyses acetyl-CoA + n malonyl-CoA + 2n NADPH + 4n H(+) = a long-chain-acyl-CoA + n CoA + n CO2 + 2n NADP(+).. It catalyses the reaction a fatty acyl-[ACP] + malonyl-[ACP] + H(+) = a 3-oxoacyl-[ACP] + holo-[ACP] + CO2. The catalysed reaction is a (3R)-hydroxyacyl-[ACP] + NADP(+) = a 3-oxoacyl-[ACP] + NADPH + H(+). Fatty acid synthetase catalyzes the formation of long-chain fatty acids from acetyl-CoA, malonyl-CoA and NADPH. The alpha subunit contains domains for: acyl carrier protein, 3-oxoacyl-[acyl-carrier-protein] reductase, and 3-oxoacyl-[acyl-carrier-protein] synthase. This subunit coordinates the binding of the six beta subunits to the enzyme complex. The protein is Fatty acid synthase subunit alpha (fas2) of Schizosaccharomyces pombe (strain 972 / ATCC 24843) (Fission yeast).